A 735-amino-acid chain; its full sequence is Urea active transporter (735 aa).

The Cytoplasmic portion of the chain corresponds to 1 to 14 (MGEFKPPLPQGAGY). Residues 15-35 (AIVLGLGAVFAGMMVLTTYLL) form a helical membrane-spanning segment. The Extracellular segment spans residues 36–85 (KRYQKEIITAEEFTTAGRSVKTGLVAAAVVSSWIWCSTLLTSSTKEYADG). A helical membrane pass occupies residues 86-106 (IFGGYAYAAGACFQIIAFAIL). The Cytoplasmic portion of the chain corresponds to 107–130 (AIKTKQMAPNAHTYLELVRTRYGK). The helical transmembrane segment at 131-151 (IGHGCYLFYAIATNILVTSML) threads the bilayer. Residues 152-166 (LTSGSAVFSDLTGMN) are Extracellular-facing. The chain crosses the membrane as a helical span at residues 167-187 (TIASCFLLPVGVVVYTLFGGI). The Cytoplasmic segment spans residues 188–189 (KA). The chain crosses the membrane as a helical span at residues 190–210 (TFLTDYMHTCVIIIIVLVFAF). Topologically, residues 211–253 (KVYATSDVLGSPGKVYDLVREAAKRHPVDGNYQGEYMTMTSKS) are extracellular. The helical transmembrane segment at 254–274 (AGILLIINLIGNFGTVFLDNG) threads the bilayer. Topologically, residues 275-295 (YWNKAISASPAASLKAYAIGG) are cytoplasmic. Residues 296 to 316 (LAWFAVPSLISLTMGLACLAV) form a helical membrane-spanning segment. Topologically, residues 317-343 (ETSPNFPTYPDPLTSFQANSGLVLPAA) are extracellular. Residues 344-364 (AIAIMGKGGAVASLLMIFMAV) traverse the membrane as a helical segment. Residues 365–403 (TSAMSAELIAVSSVFTYDIYREYIDPRASGKKLIYTSHV) lie on the Cytoplasmic side of the membrane. Residues 404-424 (ACIFFGLAMSGFSVGLYYGGI) form a helical membrane-spanning segment. A topological domain (extracellular) is located at residue Ser425. Residues 426-446 (MGYIYEMMGIIISSAVLPVVL) form a helical membrane-spanning segment. Topologically, residues 447 to 454 (TLCSKDMN) are cytoplasmic. A helical membrane pass occupies residues 455-475 (LVAAVVSPILGTGLAIMSWLV). The Extracellular portion of the chain corresponds to 476-496 (CTKSLYKELTVDTTFMDYPML). A helical transmembrane segment spans residues 497–517 (TGNLVALLSPAIFIPILTYVF). The Cytoplasmic segment spans residues 518 to 618 (KPQNFDWEKM…EQRELARGLK (101 aa)). The interval 553 to 572 (ANDKEQEEETNSLVSDSEKN) is disordered. A helical membrane pass occupies residues 619-639 (IAYFLCVFFALAFLVVWPMPM). Residues 640–650 (YGSKYIFSKKF) lie on the Extracellular side of the membrane. The chain crosses the membrane as a helical span at residues 651–671 (FTGWVVVMIIWLFFSAFAVCI). The Cytoplasmic portion of the chain corresponds to 672–735 (YPLWEGRHGI…SHFGQVDEII (64 aa)).

Belongs to the sodium:solute symporter (SSF) (TC 2.A.21) family. May polymerize.

The protein resides in the membrane. Functionally, required for active transport of urea. The sequence is that of Urea active transporter (DUR3) from Saccharomyces cerevisiae (strain ATCC 204508 / S288c) (Baker's yeast).